Consider the following 241-residue polypeptide: Probable WRKY transcription factor 63 (241 aa).

The disordered stretch occupies residues 56–79; sequence NSPNRQPHHESSSRDMAGLVPQRS. Positions 97-165 form a DNA-binding region, WRKY; that stretch reads SPNPRLDDGF…YLGQHTCKAF (69 aa).

This sequence belongs to the WRKY group III family.

The protein resides in the nucleus. Functionally, transcription factor. Interacts specifically with the W box (5'-(T)TGAC[CT]-3'), a frequently occurring elicitor-responsive cis-acting element. The sequence is that of Probable WRKY transcription factor 63 (WRKY63) from Arabidopsis thaliana (Mouse-ear cress).